A 296-amino-acid polypeptide reads, in one-letter code: Tyrosine recombinase XerC (296 aa).

Residues 1–84 (MDKIQETFLY…TLRTFYEFWM (84 aa)) enclose the Core-binding (CB) domain. A Tyr recombinase domain is found at 105-286 (YLPQFFYEEE…SNQQLRKVYL (182 aa)). Residues Arg-145, Lys-169, His-238, Arg-241, and His-264 contribute to the active site. Tyr-273 (O-(3'-phospho-DNA)-tyrosine intermediate) is an active-site residue.

Belongs to the 'phage' integrase family. XerC subfamily. In terms of assembly, forms a cyclic heterotetrameric complex composed of two molecules of XerC and two molecules of XerD.

It is found in the cytoplasm. Its function is as follows. Site-specific tyrosine recombinase, which acts by catalyzing the cutting and rejoining of the recombining DNA molecules. The XerC-XerD complex is essential to convert dimers of the bacterial chromosome into monomers to permit their segregation at cell division. It also contributes to the segregational stability of plasmids. The chain is Tyrosine recombinase XerC from Staphylococcus epidermidis (strain ATCC 35984 / DSM 28319 / BCRC 17069 / CCUG 31568 / BM 3577 / RP62A).